We begin with the raw amino-acid sequence, 272 residues long: L-aspartate dehydrogenase (272 aa).

NAD(+) contacts are provided by A125 and N192. Residue H222 is part of the active site.

The protein belongs to the L-aspartate dehydrogenase family.

The catalysed reaction is L-aspartate + NADP(+) + H2O = oxaloacetate + NH4(+) + NADPH + H(+). It catalyses the reaction L-aspartate + NAD(+) + H2O = oxaloacetate + NH4(+) + NADH + H(+). It functions in the pathway cofactor biosynthesis; NAD(+) biosynthesis; iminoaspartate from L-aspartate (dehydrogenase route): step 1/1. Functionally, specifically catalyzes the NAD or NADP-dependent dehydrogenation of L-aspartate to iminoaspartate. The protein is L-aspartate dehydrogenase of Nitrosopumilus maritimus (strain SCM1).